The primary structure comprises 100 residues: Urease subunit gamma (100 aa).

This sequence belongs to the urease gamma subunit family. As to quaternary structure, heterotrimer of UreA (gamma), UreB (beta) and UreC (alpha) subunits. Three heterotrimers associate to form the active enzyme.

It localises to the cytoplasm. The enzyme catalyses urea + 2 H2O + H(+) = hydrogencarbonate + 2 NH4(+). It functions in the pathway nitrogen metabolism; urea degradation; CO(2) and NH(3) from urea (urease route): step 1/1. The sequence is that of Urease subunit gamma from Sinorhizobium fredii (strain NBRC 101917 / NGR234).